A 718-amino-acid polypeptide reads, in one-letter code: DNA ligase (718 aa).

Residues Asp-44–Asp-48, Ser-93–Leu-94, and Glu-127 each bind NAD(+). Lys-129 acts as the N6-AMP-lysine intermediate in catalysis. NAD(+) is bound by residues Arg-150, Glu-186, Lys-302, and Lys-326. Zn(2+) is bound by residues Cys-432, Cys-435, Cys-456, and Cys-462. The 79-residue stretch at Thr-640–Gly-718 folds into the BRCT domain.

It belongs to the NAD-dependent DNA ligase family. LigA subfamily. It depends on Mg(2+) as a cofactor. Mn(2+) is required as a cofactor.

The catalysed reaction is NAD(+) + (deoxyribonucleotide)n-3'-hydroxyl + 5'-phospho-(deoxyribonucleotide)m = (deoxyribonucleotide)n+m + AMP + beta-nicotinamide D-nucleotide.. DNA ligase that catalyzes the formation of phosphodiester linkages between 5'-phosphoryl and 3'-hydroxyl groups in double-stranded DNA using NAD as a coenzyme and as the energy source for the reaction. It is essential for DNA replication and repair of damaged DNA. This chain is DNA ligase, found in Rhizobium johnstonii (strain DSM 114642 / LMG 32736 / 3841) (Rhizobium leguminosarum bv. viciae).